The primary structure comprises 454 residues: Mitochondrial dynamics protein MID49 (454 aa).

Residues 1 to 22 (MAEFSQKRGKRRGDEGLGSMVD) are Mitochondrial intermembrane-facing. The chain crosses the membrane as a helical span at residues 23 to 43 (FLLANARLVLGVGGAAVLGIA). The Cytoplasmic portion of the chain corresponds to 44-454 (TLAVKRFIDR…SGLQEPEGLL (411 aa)). Residues 76-119 (ATPHLQPRPPPAALSQPVLPLAPSSSAPEGPAKSDPEVTPQLSS) are disordered. Residues 88–108 (ALSQPVLPLAPSSSAPEGPAK) are compositionally biased toward low complexity.

Belongs to the MID49/MID51 family. In terms of assembly, interacts with DNM1L.

Its subcellular location is the mitochondrion outer membrane. Mitochondrial outer membrane protein which regulates mitochondrial organization. It is required for mitochondrial fission and promotes the recruitment and association of the fission mediator dynamin-related protein 1 (DNM1L) to the mitochondrial surface independently of the mitochondrial fission FIS1 and MFF proteins. Regulates DNM1L GTPase activity. This chain is Mitochondrial dynamics protein MID49 (MIEF2), found in Pongo abelii (Sumatran orangutan).